The sequence spans 156 residues: Succinate dehydrogenase assembly factor 2-B, mitochondrial (156 aa).

The N-terminal 24 residues, 1 to 24, are a transit peptide targeting the mitochondrion; the sequence is MLRQFIVSTVGRRLQLPMMAQSRL.

The protein belongs to the SDHAF2 family. Interacts with the flavoprotein subunit within the SDH catalytic dimer.

It localises to the mitochondrion matrix. Its function is as follows. Plays an essential role in the assembly of succinate dehydrogenase (SDH), an enzyme complex (also referred to as respiratory complex II) that is a component of both the tricarboxylic acid (TCA) cycle and the mitochondrial electron transport chain, and which couples the oxidation of succinate to fumarate with the reduction of ubiquinone (coenzyme Q) to ubiquinol. Required for flavinylation (covalent attachment of FAD) of the flavoprotein subunit of the SDH catalytic dimer. The protein is Succinate dehydrogenase assembly factor 2-B, mitochondrial of Drosophila simulans (Fruit fly).